A 135-amino-acid chain; its full sequence is ATP synthase epsilon chain, chloroplastic (135 aa).

It belongs to the ATPase epsilon chain family. In terms of assembly, F-type ATPases have 2 components, CF(1) - the catalytic core - and CF(0) - the membrane proton channel. CF(1) has five subunits: alpha(3), beta(3), gamma(1), delta(1), epsilon(1). CF(0) has three main subunits: a, b and c.

The protein localises to the plastid. It is found in the chloroplast thylakoid membrane. In terms of biological role, produces ATP from ADP in the presence of a proton gradient across the membrane. This chain is ATP synthase epsilon chain, chloroplastic, found in Stigeoclonium helveticum (Green alga).